The chain runs to 264 residues: Thiazole synthase (264 aa).

The Schiff-base intermediate with DXP role is filled by Lys-98. 1-deoxy-D-xylulose 5-phosphate contacts are provided by residues Gly-159, 185–186 (AG), and 207–208 (AT).

This sequence belongs to the ThiG family. In terms of assembly, homotetramer. Forms heterodimers with either ThiH or ThiS.

The protein localises to the cytoplasm. The catalysed reaction is [ThiS sulfur-carrier protein]-C-terminal-Gly-aminoethanethioate + 2-iminoacetate + 1-deoxy-D-xylulose 5-phosphate = [ThiS sulfur-carrier protein]-C-terminal Gly-Gly + 2-[(2R,5Z)-2-carboxy-4-methylthiazol-5(2H)-ylidene]ethyl phosphate + 2 H2O + H(+). The protein operates within cofactor biosynthesis; thiamine diphosphate biosynthesis. Catalyzes the rearrangement of 1-deoxy-D-xylulose 5-phosphate (DXP) to produce the thiazole phosphate moiety of thiamine. Sulfur is provided by the thiocarboxylate moiety of the carrier protein ThiS. In vitro, sulfur can be provided by H(2)S. In Mycobacterium marinum (strain ATCC BAA-535 / M), this protein is Thiazole synthase.